The following is a 260-amino-acid chain: Myb transcription factor 42 (260 aa).

2 consecutive HTH myb-type domains span residues 9–61 (KAHT…INYL) and 62–116 (RPDL…RRKL). 2 DNA-binding regions (H-T-H motif) span residues 37 to 61 (WRSL…INYL) and 89 to 112 (WSLI…NTHI).

Mainly expressed in the aerial parts and, to a lower extent, in roots.

It is found in the nucleus. In terms of biological role, transcription factor that negatively regulates the expression of caffeic acid O-methyl-transferase genes (COMTs) and of other genes involved in the biosynthesis of lignin, thus preventing lignification. The sequence is that of Myb transcription factor 42 from Zea mays (Maize).